The sequence spans 315 residues: Methionyl-tRNA formyltransferase (315 aa).

113 to 116 (SLLP) contributes to the (6S)-5,6,7,8-tetrahydrofolate binding site.

Belongs to the Fmt family.

It catalyses the reaction L-methionyl-tRNA(fMet) + (6R)-10-formyltetrahydrofolate = N-formyl-L-methionyl-tRNA(fMet) + (6S)-5,6,7,8-tetrahydrofolate + H(+). In terms of biological role, attaches a formyl group to the free amino group of methionyl-tRNA(fMet). The formyl group appears to play a dual role in the initiator identity of N-formylmethionyl-tRNA by promoting its recognition by IF2 and preventing the misappropriation of this tRNA by the elongation apparatus. The sequence is that of Methionyl-tRNA formyltransferase from Klebsiella pneumoniae (strain 342).